A 1463-amino-acid chain; its full sequence is Gag-Pol polyprotein (1463 aa).

Gly-2 carries N-myristoyl glycine; by host lipidation. An interaction with Gp41 region spans residues 7–31; sequence VLRGKKADELEKIRLRPGGKKKYRL. A Nuclear export signal motif is present at residues 16–22; the sequence is LEKIRLR. The short motif at 26-32 is the Nuclear localization signal element; the sequence is KKKYRLK. Positions 112-138 are disordered; sequence TKTTEKMPSTSRPTAPPSGNGGNFPVQ. The interaction with human PPIA/CYPA and NUP153 stretch occupies residues 191 to 228; it reads NCVGDHQAAMQIIREIINEEAADWDAQHPIPGPLPAGQ. A dimerization/Multimerization of capsid protein p24 region spans residues 279 to 365; sequence YNPTNILDIK…GGPGQKARLM (87 aa). 2 consecutive CCHC-type zinc fingers follow at residues 389–406 and 410–427; these read IKCW…QCRA and QGCW…KCPE. The segment at 441–508 is disordered; it reads EAPQFPCGPN…TRDTMQRDDR (68 aa). Residues 462–508 are compositionally biased toward basic and acidic residues; it reads RPSRGPTREVHAAREKAERAEREAIQRSDRGLPAARETRDTMQRDDR. A dimerization of protease region spans residues 513–517; that stretch reads PQFSL. A Peptidase A2 domain is found at 532 to 601; the sequence is VEVLLDTGAD…TPINIFGRNI (70 aa). Residue Asp-537 is the For protease activity; shared with dimeric partner of the active site. Dimerization of protease stretches follow at residues 561–567 and 600–612; these read GIGGFIN and NILT…LNLP. Positions 655–845 constitute a Reverse transcriptase domain; the sequence is EGQLEEAPPT…PPYQWMGYEL (191 aa). Residues Asp-721, Asp-796, and Asp-797 each contribute to the Mg(2+) site. Residues 838–846 form an RT 'primer grip' region; sequence YQWMGYELW. A Tryptophan repeat motif motif is present at residues 1008–1024; that stretch reads WEQWWDNYWQVTWIPDW. Residues 1044 to 1167 enclose the RNase H type-1 domain; that stretch reads ILGAETFYTD…VDHLVSQGIR (124 aa). Mg(2+)-binding residues include Asp-1053, Glu-1088, Asp-1108, and Asp-1159. Residues 1173-1214 form an Integrase-type zinc finger; sequence EKIEPAQEEHEKYHSNVKELSHKFGLPKLVARQIVNTCTQCQ. Residues His-1182, His-1186, Cys-1210, and Cys-1213 each coordinate Zn(2+). The region spanning 1223–1374 is the Integrase catalytic domain; the sequence is QVNAELGTWQ…TPAERLINMV (152 aa). Residues Asp-1234, Asp-1286, and Glu-1322 each coordinate Mg(2+). A DNA-binding region (integrase-type) is located at residues 1393-1440; the sequence is FRVYFREGRDQLWKGPGELLWKGDGAVIVKVGADIKIIPRRKAKIIKD.

As to quaternary structure, homotrimer; further assembles as hexamers of trimers. Interacts with gp41 (via C-terminus). Interacts with host CALM1; this interaction induces a conformational change in the Matrix protein, triggering exposure of the myristate group. Interacts with host AP3D1; this interaction allows the polyprotein trafficking to multivesicular bodies during virus assembly. Part of the pre-integration complex (PIC) which is composed of viral genome, matrix protein, Vpr and integrase. In terms of assembly, homodimer; the homodimer further multimerizes as homohexamers or homopentamers. Interacts with human PPIA/CYPA. Interacts with human NUP153. Interacts with host PDZD8; this interaction stabilizes the capsid. Interacts with monkey TRIM5; this interaction destabilizes the capsid. Homodimer, whose active site consists of two apposed aspartic acid residues. As to quaternary structure, heterodimer of p66 RT and p51 RT (RT p66/p51). Heterodimerization of RT is essential for DNA polymerase activity. The overall folding of the subdomains is similar in p66 RT and p51 RT but the spatial arrangements of the subdomains are dramatically different. In terms of assembly, homotetramer; may further associate as a homohexadecamer. Part of the pre-integration complex (PIC) which is composed of viral genome, matrix protein, Vpr and integrase. Interacts with human SMARCB1/INI1 and human PSIP1/LEDGF isoform 1. Interacts with human KPNA3; this interaction might play a role in nuclear import of the pre-integration complex. Interacts with human NUP153; this interaction might play a role in nuclear import of the pre-integration complex. It depends on Mg(2+) as a cofactor. Post-translationally, specific enzymatic cleavages by the viral protease yield mature proteins. The protease is released by autocatalytic cleavage. The polyprotein is cleaved during and after budding, this process is termed maturation. Proteolytic cleavage of p66 RT removes the RNase H domain to yield the p51 RT subunit. Nucleocapsid protein p7 might be further cleaved after virus entry.

The protein localises to the host cell membrane. It localises to the host endosome. Its subcellular location is the host multivesicular body. The protein resides in the virion membrane. It is found in the host nucleus. The protein localises to the host cytoplasm. It localises to the virion. It carries out the reaction Endopeptidase for which the P1 residue is preferably hydrophobic.. The enzyme catalyses Endohydrolysis of RNA in RNA/DNA hybrids. Three different cleavage modes: 1. sequence-specific internal cleavage of RNA. Human immunodeficiency virus type 1 and Moloney murine leukemia virus enzymes prefer to cleave the RNA strand one nucleotide away from the RNA-DNA junction. 2. RNA 5'-end directed cleavage 13-19 nucleotides from the RNA end. 3. DNA 3'-end directed cleavage 15-20 nucleotides away from the primer terminus.. It catalyses the reaction 3'-end directed exonucleolytic cleavage of viral RNA-DNA hybrid.. The catalysed reaction is DNA(n) + a 2'-deoxyribonucleoside 5'-triphosphate = DNA(n+1) + diphosphate. With respect to regulation, protease: The viral protease is inhibited by many synthetic protease inhibitors (PIs), such as amprenavir, atazanavir, indinavir, loprinavir, nelfinavir, ritonavir and saquinavir. Use of protease inhibitors in tritherapy regimens permit more ambitious therapeutic strategies. Reverse transcriptase/ribonuclease H: RT can be inhibited either by nucleoside RT inhibitors (NRTIs) or by non nucleoside RT inhibitors (NNRTIs). NRTIs act as chain terminators, whereas NNRTIs inhibit DNA polymerization by binding a small hydrophobic pocket near the RT active site and inducing an allosteric change in this region. Classical NRTIs are abacavir, adefovir (PMEA), didanosine (ddI), lamivudine (3TC), stavudine (d4T), tenofovir (PMPA), zalcitabine (ddC), and zidovudine (AZT). Classical NNRTIs are atevirdine (BHAP U-87201E), delavirdine, efavirenz (DMP-266), emivirine (I-EBU), and nevirapine (BI-RG-587). The tritherapies used as a basic effective treatment of AIDS associate two NRTIs and one NNRTI. Functionally, mediates, with Gag polyprotein, the essential events in virion assembly, including binding the plasma membrane, making the protein-protein interactions necessary to create spherical particles, recruiting the viral Env proteins, and packaging the genomic RNA via direct interactions with the RNA packaging sequence (Psi). Gag-Pol polyprotein may regulate its own translation, by the binding genomic RNA in the 5'-UTR. At low concentration, the polyprotein would promote translation, whereas at high concentration, the polyprotein would encapsidate genomic RNA and then shut off translation. Targets the polyprotein to the plasma membrane via a multipartite membrane-binding signal, that includes its myristoylated N-terminus. Matrix protein is part of the pre-integration complex. Implicated in the release from host cell mediated by Vpu. Binds to RNA. Its function is as follows. Forms the conical core that encapsulates the genomic RNA-nucleocapsid complex in the virion. Most core are conical, with only 7% tubular. The core is constituted by capsid protein hexamer subunits. The core is disassembled soon after virion entry. Host restriction factors such as TRIM5-alpha or TRIMCyp bind retroviral capsids and cause premature capsid disassembly, leading to blocks in reverse transcription. Capsid restriction by TRIM5 is one of the factors which restricts HIV-1 to the human species. Host PIN1 apparently facilitates the virion uncoating. On the other hand, interactions with PDZD8 or CYPA stabilize the capsid. In terms of biological role, encapsulates and protects viral dimeric unspliced genomic RNA (gRNA). Binds these RNAs through its zinc fingers. Acts as a nucleic acid chaperone which is involved in rearangement of nucleic acid secondary structure during gRNA retrotranscription. Also facilitates template switch leading to recombination. As part of the polyprotein, participates in gRNA dimerization, packaging, tRNA incorporation and virion assembly. Functionally, aspartyl protease that mediates proteolytic cleavages of Gag and Gag-Pol polyproteins during or shortly after the release of the virion from the plasma membrane. Cleavages take place as an ordered, step-wise cascade to yield mature proteins. This process is called maturation. Displays maximal activity during the budding process just prior to particle release from the cell. Also cleaves Nef and Vif, probably concomitantly with viral structural proteins on maturation of virus particles. Hydrolyzes host EIF4GI and PABP1 in order to shut off the capped cellular mRNA translation. The resulting inhibition of cellular protein synthesis serves to ensure maximal viral gene expression and to evade host immune response. Multifunctional enzyme that converts the viral RNA genome into dsDNA in the cytoplasm, shortly after virus entry into the cell. This enzyme displays a DNA polymerase activity that can copy either DNA or RNA templates, and a ribonuclease H (RNase H) activity that cleaves the RNA strand of RNA-DNA heteroduplexes in a partially processive 3' to 5' endonucleasic mode. Conversion of viral genomic RNA into dsDNA requires many steps. A tRNA(3)-Lys binds to the primer-binding site (PBS) situated at the 5'-end of the viral RNA. RT uses the 3' end of the tRNA primer to perform a short round of RNA-dependent minus-strand DNA synthesis. The reading proceeds through the U5 region and ends after the repeated (R) region which is present at both ends of viral RNA. The portion of the RNA-DNA heteroduplex is digested by the RNase H, resulting in a ssDNA product attached to the tRNA primer. This ssDNA/tRNA hybridizes with the identical R region situated at the 3' end of viral RNA. This template exchange, known as minus-strand DNA strong stop transfer, can be either intra- or intermolecular. RT uses the 3' end of this newly synthesized short ssDNA to perform the RNA-dependent minus-strand DNA synthesis of the whole template. RNase H digests the RNA template except for two polypurine tracts (PPTs) situated at the 5'-end and near the center of the genome. It is not clear if both polymerase and RNase H activities are simultaneous. RNase H probably can proceed both in a polymerase-dependent (RNA cut into small fragments by the same RT performing DNA synthesis) and a polymerase-independent mode (cleavage of remaining RNA fragments by free RTs). Secondly, RT performs DNA-directed plus-strand DNA synthesis using the PPTs that have not been removed by RNase H as primers. PPTs and tRNA primers are then removed by RNase H. The 3' and 5' ssDNA PBS regions hybridize to form a circular dsDNA intermediate. Strand displacement synthesis by RT to the PBS and PPT ends produces a blunt ended, linear dsDNA copy of the viral genome that includes long terminal repeats (LTRs) at both ends. Its function is as follows. Catalyzes viral DNA integration into the host chromosome, by performing a series of DNA cutting and joining reactions. This enzyme activity takes place after virion entry into a cell and reverse transcription of the RNA genome in dsDNA. The first step in the integration process is 3' processing. This step requires a complex comprising the viral genome, matrix protein, Vpr and integrase. This complex is called the pre-integration complex (PIC). The integrase protein removes 2 nucleotides from each 3' end of the viral DNA, leaving recessed CA OH's at the 3' ends. In the second step, the PIC enters cell nucleus. This process is mediated through integrase and Vpr proteins, and allows the virus to infect a non dividing cell. This ability to enter the nucleus is specific of lentiviruses, other retroviruses cannot and rely on cell division to access cell chromosomes. In the third step, termed strand transfer, the integrase protein joins the previously processed 3' ends to the 5' ends of strands of target cellular DNA at the site of integration. The 5'-ends are produced by integrase-catalyzed staggered cuts, 5 bp apart. A Y-shaped, gapped, recombination intermediate results, with the 5'-ends of the viral DNA strands and the 3' ends of target DNA strands remaining unjoined, flanking a gap of 5 bp. The last step is viral DNA integration into host chromosome. This involves host DNA repair synthesis in which the 5 bp gaps between the unjoined strands are filled in and then ligated. Since this process occurs at both cuts flanking the HIV genome, a 5 bp duplication of host DNA is produced at the ends of HIV-1 integration. Alternatively, Integrase may catalyze the excision of viral DNA just after strand transfer, this is termed disintegration. The protein is Gag-Pol polyprotein (gag-pol) of Human immunodeficiency virus type 2 subtype A (isolate ST) (HIV-2).